A 677-amino-acid polypeptide reads, in one-letter code: Penicillin-binding protein activator LpoA (677 aa).

An N-terminal signal peptide occupies residues 1 to 26 (MLPSKIVRHKAGRFVPVLLAGLILAA). Cys27 is lipidated: N-palmitoyl cysteine. A lipid anchor (S-diacylglycerol cysteine) is attached at Cys27. A disordered region spans residues 309–359 (QPADANAVVSPSANPAAAQQSGTAQQPATTQQQPQQQPAAEPASNAQVKVY). Residues 313 to 355 (ANAVVSPSANPAAAQQSGTAQQPATTQQQPQQQPAAEPASNAQ) show a composition bias toward low complexity.

The protein belongs to the LpoA family. In terms of assembly, interacts with PBP1a.

It localises to the cell outer membrane. In terms of biological role, regulator of peptidoglycan synthesis that is essential for the function of penicillin-binding protein 1A (PBP1a). In Pantoea ananatis (strain LMG 20103), this protein is Penicillin-binding protein activator LpoA.